Here is a 429-residue protein sequence, read N- to C-terminus: UDP-N-acetylglucosamine 1-carboxyvinyltransferase (429 aa).

Residue 22-23 coordinates phosphoenolpyruvate; the sequence is KN. R102 contributes to the UDP-N-acetyl-alpha-D-glucosamine binding site. C126 (proton donor) is an active-site residue. A 2-(S-cysteinyl)pyruvic acid O-phosphothioketal modification is found at C126. Residues 131–135, D316, and I338 contribute to the UDP-N-acetyl-alpha-D-glucosamine site; that span reads RPVDL.

Belongs to the EPSP synthase family. MurA subfamily.

The protein localises to the cytoplasm. It carries out the reaction phosphoenolpyruvate + UDP-N-acetyl-alpha-D-glucosamine = UDP-N-acetyl-3-O-(1-carboxyvinyl)-alpha-D-glucosamine + phosphate. The protein operates within cell wall biogenesis; peptidoglycan biosynthesis. Cell wall formation. Adds enolpyruvyl to UDP-N-acetylglucosamine. This chain is UDP-N-acetylglucosamine 1-carboxyvinyltransferase, found in Nitrobacter hamburgensis (strain DSM 10229 / NCIMB 13809 / X14).